A 155-amino-acid polypeptide reads, in one-letter code: Endoribonuclease YbeY (155 aa).

Zn(2+)-binding residues include H117, H121, and H127.

The protein belongs to the endoribonuclease YbeY family. Zn(2+) serves as cofactor.

The protein resides in the cytoplasm. Functionally, single strand-specific metallo-endoribonuclease involved in late-stage 70S ribosome quality control and in maturation of the 3' terminus of the 16S rRNA. The chain is Endoribonuclease YbeY from Psychrobacter cryohalolentis (strain ATCC BAA-1226 / DSM 17306 / VKM B-2378 / K5).